A 38-amino-acid chain; its full sequence is Large ribosomal subunit protein bL36A (38 aa).

It belongs to the bacterial ribosomal protein bL36 family.

The sequence is that of Large ribosomal subunit protein bL36A from Prochlorococcus marinus (strain MIT 9515).